A 516-amino-acid chain; its full sequence is Delta(24)-sterol reductase (516 aa).

The first 22 residues, 1-22, serve as a signal peptide directing secretion; that stretch reads MEPAVSLAVCALLFLLWVRLKG. The Lumenal portion of the chain corresponds to 23 to 31; that stretch reads LEFVLIHQR. Residues 32-52 form a helical membrane-spanning segment; the sequence is WVFVCLFLLPLSLIFDIYYYV. The Cytoplasmic portion of the chain corresponds to 53–516; that stretch reads RAWVVFKLSS…YDKICKAARH (464 aa). The FAD-binding PCMH-type domain occupies 58 to 234; it reads FKLSSAPRLH…VAAEIRIIPA (177 aa). 163–175 is an FAD binding site; it reads TVGGLIMGTGIES.

Belongs to the FAD-binding oxidoreductase/transferase type 4 family. In terms of assembly, interacts with DHCR7; this interaction regulates DHCR7 activity. The cofactor is FAD. Highly expressed in brain and adrenal gland with moderate expression in liver, lung, spleen, prostate and spinal cord. Low expression in heart, uterus and prostate. Undetectable in blood cells. In the brain, strongly expressed in cortical regions, substantia nigra, caudate nucleus, hippocampus, medulla oblongata and pons. In brains affected by Alzheimer disease, expression in the inferior temporal lobe is substantially lower than in the frontal cortex.

The protein resides in the endoplasmic reticulum membrane. It is found in the golgi apparatus membrane. The catalysed reaction is cholesterol + NADP(+) = desmosterol + NADPH + H(+). The enzyme catalyses lanosterol + NADPH + H(+) = 24,25-dihydrolanosterol + NADP(+). It carries out the reaction 5alpha-cholest-8-en-3beta-ol + NADP(+) = zymosterol + NADPH + H(+). The protein operates within steroid biosynthesis; cholesterol biosynthesis. Its function is as follows. Catalyzes the reduction of the delta-24 double bond of sterol intermediates during cholesterol biosynthesis. In addition to its cholesterol-synthesizing activity, can protect cells from oxidative stress by reducing caspase 3 activity during apoptosis induced by oxidative stress. Also protects against amyloid-beta peptide-induced apoptosis. The polypeptide is Delta(24)-sterol reductase (DHCR24) (Homo sapiens (Human)).